The sequence spans 380 residues: Succinyl-diaminopimelate desuccinylase (380 aa).

Zn(2+) is bound at residue H69. D71 is an active-site residue. D102 contacts Zn(2+). Catalysis depends on E135, which acts as the Proton acceptor. Zn(2+)-binding residues include E136, E164, and H353.

Belongs to the peptidase M20A family. DapE subfamily. Homodimer. It depends on Zn(2+) as a cofactor. Requires Co(2+) as cofactor.

It catalyses the reaction N-succinyl-(2S,6S)-2,6-diaminopimelate + H2O = (2S,6S)-2,6-diaminopimelate + succinate. The protein operates within amino-acid biosynthesis; L-lysine biosynthesis via DAP pathway; LL-2,6-diaminopimelate from (S)-tetrahydrodipicolinate (succinylase route): step 3/3. In terms of biological role, catalyzes the hydrolysis of N-succinyl-L,L-diaminopimelic acid (SDAP), forming succinate and LL-2,6-diaminopimelate (DAP), an intermediate involved in the bacterial biosynthesis of lysine and meso-diaminopimelic acid, an essential component of bacterial cell walls. This chain is Succinyl-diaminopimelate desuccinylase, found in Phenylobacterium zucineum (strain HLK1).